A 107-amino-acid polypeptide reads, in one-letter code: UPF0145 protein ETA_21660 (107 aa).

Belongs to the UPF0145 family.

This Erwinia tasmaniensis (strain DSM 17950 / CFBP 7177 / CIP 109463 / NCPPB 4357 / Et1/99) protein is UPF0145 protein ETA_21660.